A 366-amino-acid polypeptide reads, in one-letter code: Chorismate synthase (366 aa).

Arg-48 is a binding site for NADP(+). Residues 125–127 (RSS), Gly-283, 298–302 (KPTPS), and Arg-324 contribute to the FMN site.

Belongs to the chorismate synthase family. Homotetramer. FMNH2 is required as a cofactor.

It catalyses the reaction 5-O-(1-carboxyvinyl)-3-phosphoshikimate = chorismate + phosphate. It functions in the pathway metabolic intermediate biosynthesis; chorismate biosynthesis; chorismate from D-erythrose 4-phosphate and phosphoenolpyruvate: step 7/7. Functionally, catalyzes the anti-1,4-elimination of the C-3 phosphate and the C-6 proR hydrogen from 5-enolpyruvylshikimate-3-phosphate (EPSP) to yield chorismate, which is the branch point compound that serves as the starting substrate for the three terminal pathways of aromatic amino acid biosynthesis. This reaction introduces a second double bond into the aromatic ring system. This Lachnospira eligens (strain ATCC 27750 / DSM 3376 / VPI C15-48 / C15-B4) (Eubacterium eligens) protein is Chorismate synthase.